The following is a 115-amino-acid chain: MGILIGTFPPRRRPTLHETENHVKKKNWRCGKGIKCFFKPSDQVYLVGQVDCRFLLHHNAKNKQFPLIFVTNFITSLPNFQFPLFFFVSLLHLYRRPRNQISTRKYTPHTQSGRR.

Has a role in meiosis. The polypeptide is Meiotically up-regulated gene 42 protein (mug42) (Schizosaccharomyces pombe (strain 972 / ATCC 24843) (Fission yeast)).